The following is a 438-amino-acid chain: sn-glycerol-3-phosphate-binding periplasmic protein UgpB (438 aa).

The first 23 residues, methionine 1–alanine 23, serve as a signal peptide directing secretion. Sn-glycerol 3-phosphate contacts are provided by tyrosine 65, glutamate 89, serine 144, serine 270, glycine 307, tyrosine 346, and arginine 397.

This sequence belongs to the bacterial solute-binding protein 1 family. As to quaternary structure, the complex is composed of two ATP-binding proteins (UgpC), two transmembrane proteins (UgpA and UgpE) and a solute-binding protein (UgpB).

The protein localises to the periplasm. Part of the ABC transporter complex UgpBAEC involved in sn-glycerol-3-phosphate (G3P) import. Binds G3P. The sequence is that of sn-glycerol-3-phosphate-binding periplasmic protein UgpB (ugpB) from Shigella flexneri.